The following is a 588-amino-acid chain: NADP-dependent malic enzyme 3 (588 aa).

Position 2 is an N-acetylglycine (glycine 2). Tyrosine 136 acts as the Proton donor in catalysis. Position 189 (arginine 189) interacts with NADP(+). Lysine 207 functions as the Proton acceptor in the catalytic mechanism. A divalent metal cation-binding residues include glutamate 279, aspartate 280, and aspartate 303. NADP(+) is bound by residues aspartate 303, 332 to 348 (LFLGAGEAGTGIAELIA), and asparagine 444.

Belongs to the malic enzymes family. As to quaternary structure, homohexamers and homooctamers. Requires Mg(2+) as cofactor. Mn(2+) is required as a cofactor. Mostly expressed in flowers, and, to a lower extent, in stems. In leaves and stems, restricted to the trichomes and trichome basal cells. Also present in the stipules flanking the base of the inflorescence bract leaves and in the meristematic zone of developing lateral roots. In flowers, present in pollen and the abscission zone of developing siliques.

It localises to the cytoplasm. The catalysed reaction is (S)-malate + NADP(+) = pyruvate + CO2 + NADPH. It catalyses the reaction oxaloacetate + H(+) = pyruvate + CO2. Slightly activated by succinate and aspartate. Repressed by fumarate, malate, oxaloacetate and glucose. The protein is NADP-dependent malic enzyme 3 (NADP-ME3) of Arabidopsis thaliana (Mouse-ear cress).